The chain runs to 184 residues: ATP synthase subunit b (184 aa).

The chain crosses the membrane as a helical span at residues I19–P39.

The protein belongs to the ATPase B chain family. As to quaternary structure, F-type ATPases have 2 components, F(1) - the catalytic core - and F(0) - the membrane proton channel. F(1) has five subunits: alpha(3), beta(3), gamma(1), delta(1), epsilon(1). F(0) has three main subunits: a(1), b(2) and c(10-14). The alpha and beta chains form an alternating ring which encloses part of the gamma chain. F(1) is attached to F(0) by a central stalk formed by the gamma and epsilon chains, while a peripheral stalk is formed by the delta and b chains.

It is found in the cell membrane. F(1)F(0) ATP synthase produces ATP from ADP in the presence of a proton or sodium gradient. F-type ATPases consist of two structural domains, F(1) containing the extramembraneous catalytic core and F(0) containing the membrane proton channel, linked together by a central stalk and a peripheral stalk. During catalysis, ATP synthesis in the catalytic domain of F(1) is coupled via a rotary mechanism of the central stalk subunits to proton translocation. Functionally, component of the F(0) channel, it forms part of the peripheral stalk, linking F(1) to F(0). The polypeptide is ATP synthase subunit b (Cutibacterium acnes (strain DSM 16379 / KPA171202) (Propionibacterium acnes)).